Consider the following 672-residue polypeptide: DNA ligase (672 aa).

Residues 32–36, 82–83, and glutamate 113 each bind NAD(+); these read DEKYD and SL. Catalysis depends on lysine 115, which acts as the N6-AMP-lysine intermediate. Positions 136, 173, 290, and 314 each coordinate NAD(+). Zn(2+)-binding residues include cysteine 408, cysteine 411, cysteine 427, and cysteine 433. The 81-residue stretch at 592–672 folds into the BRCT domain; sequence DNNNTLFRKK…EFLNIINVYL (81 aa).

It belongs to the NAD-dependent DNA ligase family. LigA subfamily. The cofactor is Mg(2+). It depends on Mn(2+) as a cofactor.

The catalysed reaction is NAD(+) + (deoxyribonucleotide)n-3'-hydroxyl + 5'-phospho-(deoxyribonucleotide)m = (deoxyribonucleotide)n+m + AMP + beta-nicotinamide D-nucleotide.. In terms of biological role, DNA ligase that catalyzes the formation of phosphodiester linkages between 5'-phosphoryl and 3'-hydroxyl groups in double-stranded DNA using NAD as a coenzyme and as the energy source for the reaction. It is essential for DNA replication and repair of damaged DNA. The sequence is that of DNA ligase from Buchnera aphidicola subsp. Baizongia pistaciae (strain Bp).